A 209-amino-acid chain; its full sequence is Uracil phosphoribosyltransferase (209 aa).

Residues Arg79, Arg104, and 131–139 contribute to the 5-phospho-alpha-D-ribose 1-diphosphate site; that span reads DPMLATGNS. Uracil is bound by residues Ile194 and 199 to 201; that span reads GDA. Asp200 is a 5-phospho-alpha-D-ribose 1-diphosphate binding site.

It belongs to the UPRTase family. Mg(2+) is required as a cofactor.

It catalyses the reaction UMP + diphosphate = 5-phospho-alpha-D-ribose 1-diphosphate + uracil. It functions in the pathway pyrimidine metabolism; UMP biosynthesis via salvage pathway; UMP from uracil: step 1/1. With respect to regulation, allosterically activated by GTP. Its function is as follows. Catalyzes the conversion of uracil and 5-phospho-alpha-D-ribose 1-diphosphate (PRPP) to UMP and diphosphate. The sequence is that of Uracil phosphoribosyltransferase from Acidovorax ebreus (strain TPSY) (Diaphorobacter sp. (strain TPSY)).